We begin with the raw amino-acid sequence, 307 residues long: Pantothenate kinase (307 aa).

An ATP-binding site is contributed by Gly90–Ser97.

It belongs to the prokaryotic pantothenate kinase family.

Its subcellular location is the cytoplasm. It catalyses the reaction (R)-pantothenate + ATP = (R)-4'-phosphopantothenate + ADP + H(+). It functions in the pathway cofactor biosynthesis; coenzyme A biosynthesis; CoA from (R)-pantothenate: step 1/5. The sequence is that of Pantothenate kinase from Limosilactobacillus reuteri subsp. reuteri (strain JCM 1112) (Lactobacillus reuteri).